Consider the following 1218-residue polypeptide: Sodium bicarbonate cotransporter 3 (1218 aa).

Disordered regions lie at residues 1-31 and 53-99; these read MEAD…KTSS and HVPF…SQRV. The Extracellular portion of the chain corresponds to 1-612; it reads MEADGAGEQM…DFKDALSLQC (612 aa). A phosphoserine mark is found at serine 57, serine 60, serine 89, and serine 155. A compositionally biased stretch (basic residues) spans 60 to 77; sequence SRRRHRHRGHKHHHRRRK. Positions 78–90 are enriched in basic and acidic residues; it reads DKDSDKEDGRESP. A glycan (N-linked (GlcNAc...) asparagine) is linked at asparagine 176. 3 positions are modified to phosphoserine: serine 238, serine 247, and arginine 263. Residue asparagine 274 is glycosylated (N-linked (GlcNAc...) asparagine). 3 disordered regions span residues 294–350, 364–412, and 536–577; these read SRAG…DIPR, KGQE…ENST, and SIRI…HAGP. Residues 308–318 show a composition bias toward pro residues; that stretch reads VPTPQNSPPSS. The span at 319–337 shows a compositional bias: low complexity; sequence PSLSRLTSRSSQQTQPQAP. Positions 383-396 are enriched in polar residues; it reads SPQSAPGNLDSSKS. Residues serine 386, serine 404, and serine 407 each carry the phosphoserine modification. Asparagine 410 carries N-linked (GlcNAc...) asparagine glycosylation. Serine 411 and serine 560 each carry phosphoserine. Basic and acidic residues predominate over residues 567 to 576; sequence PPKEADHHAG. Residues 613 to 633 traverse the membrane as a helical segment; the sequence is LASILFLYCACMSPVITFGGL. Residues 634–641 are Cytoplasmic-facing; the sequence is LGEATEGR. A helical membrane pass occupies residues 642–662; sequence ISAIESLFGASLTGIAYSLFA. Residues 663 to 699 lie on the Extracellular side of the membrane; the sequence is GQPLTILGSTGPVLVFEKILFKFCRDYHLSYLSLRTS. Residues 700 to 720 form a helical membrane-spanning segment; sequence IGLWTSFLCIVLVATDASSLV. The Cytoplasmic segment spans residues 721 to 729; it reads CYITRFTEE. The chain crosses the membrane as a helical span at residues 730 to 750; that stretch reads AFAALICIIFIYEALEKLFHL. The Extracellular segment spans residues 751–821; the sequence is GEIYAFNMHN…MFVGSACGPH (71 aa). Cysteine 770 and cysteine 772 form a disulfide bridge. 3 N-linked (GlcNAc...) asparagine glycosylation sites follow: asparagine 780, asparagine 790, and asparagine 800. An intrachain disulfide couples cysteine 806 to cysteine 818. A helical membrane pass occupies residues 822–842; the sequence is GPYVPDVLFWCVVLFFTTFFL. Topologically, residues 843–865 are cytoplasmic; the sequence is SSFLKQFKTKRYFPTKVRSTISD. A helical transmembrane segment spans residues 866-886; it reads FAVFLTIVIMVAIDYLVGIPS. Residues 887–912 lie on the Extracellular side of the membrane; the sequence is PKLHVPEKFEPTDPSRGWIISPLGDN. Residues 913 to 933 form a helical membrane-spanning segment; the sequence is PWWTLLIAAVPALLCTILIFM. At 934-958 the chain is on the cytoplasmic side; it reads DQQITAVIINRKEHKLKKGAGYHLD. A helical membrane pass occupies residues 959-979; sequence LLMVAVMLGVCSIMGLPWFVA. Residues 980–1015 are Extracellular-facing; sequence ATVLSISHVNSLKVESECSAPGEQPKFLGIREQRVT. The essential for cell membrane localization and transport activity stretch occupies residues 1012-1135; that stretch reads QRVTGLMIFI…MDLCFTKREL (124 aa). A helical transmembrane segment spans residues 1016 to 1036; it reads GLMIFILMGLSVFMTSVLKFI. Residues 1037–1038 are Cytoplasmic-facing; the sequence is PM. Residues 1039–1059 form a helical membrane-spanning segment; sequence PVLYGVFLYMGVSSLKGIQFF. Over 1060–1096 the chain is Extracellular; the sequence is DRIKLFGMPAKHQPDLIYLRYVPLWKVHVFTVVQLTC. Methionine 1067 and leucine 1078 each carry phosphoserine. A helical membrane pass occupies residues 1097 to 1117; it reads LVLLWVIKASAAAVVFPMMVL. The tract at residues 1118 to 1140 is essential for interaction with RACK1; the sequence is ALVFVRKLMDLCFTKRELSWLDD. Residues 1118–1218 are Cytoplasmic-facing; it reads ALVFVRKLMD…KKYMDAETSL (101 aa). Positions 1138 to 1140 are CA2-binding; the sequence is LDD. Over residues 1148 to 1165 the composition is skewed to basic and acidic residues; that stretch reads KKEDDKKKKEKEEAERML. The segment at 1148-1172 is disordered; the sequence is KKEDDKKKKEKEEAERMLQGDGDTV. Threonine 1171 is subject to Phosphothreonine. 4 positions are modified to phosphoserine: serine 1180, threonine 1188, isoleucine 1201, and serine 1217. Residues 1215-1218 carry the PDZ-binding motif; that stretch reads ETSL.

The protein belongs to the anion exchanger (TC 2.A.31) family. In terms of assembly, interacts with USH1C. Forms a complex with ATP6V1B1 and NHERF1/EBP50. Interacts in a pH dependent-manner with CA2/carbonic anhydrase 2. Interacts with CFTR probably through NHERF1/EBP50. As to quaternary structure, interacts with RACK1. Undergoes lysosome-mediated degradation. In terms of processing, N-glycosylated. In terms of tissue distribution, expressed in aorta, ventricles, atrium, mesenteric artery, kidney, spleen, duodenum, jejunum, ileum, colon, lung, trachea, gastric fundus and pylorus, cerebrum, cerebellum, pancreas, liver, parotid gland, and epididymis. Expressed in the inner ear by cochlear outer and inner hair cells (at protein level). Highly expressed in testis and spleen. As to expression, specifically expressed in kidney. Specifically expressed in hippocampal neurons.

Its subcellular location is the basolateral cell membrane. It localises to the apical cell membrane. It is found in the cell projection. The protein localises to the stereocilium. The protein resides in the cell membrane. The enzyme catalyses hydrogencarbonate(in) + Na(+)(in) = hydrogencarbonate(out) + Na(+)(out). Insensitive to stilbene derivatives. Functionally, electroneutral sodium- and bicarbonate-dependent cotransporter with a Na(+):HCO3(-) 1:1 stoichiometry. Mediates the sodium-dependent bicarbonate transport important for pH recovery after acid load as well as for regulation of steady-state pH in the duodenum and vascular smooth muscle cells. Plays a key role in macrophage acidification, mediating bicarbonate import into the cytoplasm which is crucial for net acid extrusion and maintenance of cytoplasmic pH during phagocytosis. Provides cellular bicarbonate for de novo purine and pyrimidine synthesis and is a key mediator of de novo nucleotide synthesis downstream of mTORC1 signaling in proliferating cells. In Rattus norvegicus (Rat), this protein is Sodium bicarbonate cotransporter 3 (Slc4a7).